The chain runs to 397 residues: Elongation factor Tu (397 aa).

A tr-type G domain is found at 10 to 207 (KPHVNVGTIG…TLDTYIPEPE (198 aa)). The segment at 19–26 (GHVDHGKT) is G1. 19–26 (GHVDHGKT) contributes to the GTP binding site. A Mg(2+)-binding site is contributed by Thr26. The interval 60-64 (GITIN) is G2. The interval 81–84 (DCPG) is G3. Residues 81–85 (DCPGH) and 136–139 (NKAD) each bind GTP. Residues 136–139 (NKAD) form a G4 region. Positions 174 to 176 (SAL) are G5.

This sequence belongs to the TRAFAC class translation factor GTPase superfamily. Classic translation factor GTPase family. EF-Tu/EF-1A subfamily. In terms of assembly, monomer.

The protein localises to the cytoplasm. It catalyses the reaction GTP + H2O = GDP + phosphate + H(+). GTP hydrolase that promotes the GTP-dependent binding of aminoacyl-tRNA to the A-site of ribosomes during protein biosynthesis. The polypeptide is Elongation factor Tu (Pseudomonas fluorescens (strain ATCC BAA-477 / NRRL B-23932 / Pf-5)).